An 885-amino-acid chain; its full sequence is Alanine--tRNA ligase (885 aa).

Zn(2+) is bound by residues histidine 564, histidine 568, cysteine 676, and histidine 680.

This sequence belongs to the class-II aminoacyl-tRNA synthetase family. Zn(2+) is required as a cofactor.

The protein localises to the cytoplasm. The catalysed reaction is tRNA(Ala) + L-alanine + ATP = L-alanyl-tRNA(Ala) + AMP + diphosphate. Its function is as follows. Catalyzes the attachment of alanine to tRNA(Ala) in a two-step reaction: alanine is first activated by ATP to form Ala-AMP and then transferred to the acceptor end of tRNA(Ala). Also edits incorrectly charged Ser-tRNA(Ala) and Gly-tRNA(Ala) via its editing domain. In Brucella abortus (strain 2308), this protein is Alanine--tRNA ligase.